The primary structure comprises 233 residues: MAAKIFCFLMLLGLSASVATATIFPQCSQAPIASLLPPYLSPAVSSMCENPIVQPYRIQQAIATGILPLSPLFLQQPSALLQQLPLVHLVAQNIRAQQLQQLVLANLAAYSQQHQFLPFNQLAALNSAAYLQQQLPFSQLVAAYPRQFLPFNQLAALNSAAYLQQQQLLPFSQLADVSPAAFLTQQQLLPFYLHAMPNAGTLLQLQQLLPFNQLALTNSTVFYQQPIIGGALF.

Residues 1–21 form the signal peptide; sequence MAAKIFCFLMLLGLSASVATA.

It belongs to the zein family.

In terms of biological role, zeins are major seed storage proteins. This is Zein-alpha PMS2 (ZMPMS2) from Zea mays (Maize).